The sequence spans 220 residues: Cytidylate kinase (220 aa).

9-17 contacts ATP; it reads GPAASGKST.

Belongs to the cytidylate kinase family. Type 1 subfamily.

It is found in the cytoplasm. It carries out the reaction CMP + ATP = CDP + ADP. The enzyme catalyses dCMP + ATP = dCDP + ADP. This chain is Cytidylate kinase, found in Thermotoga sp. (strain RQ2).